The sequence spans 422 residues: Biofilm regulator 1 (422 aa).

2 stretches are compositionally biased toward low complexity: residues 1–19 (MSSS…TTSA) and 36–45 (SGGSNNGNGS). Disordered stretches follow at residues 1-86 (MSSS…KCPP) and 116-207 (RLSS…PSHP). Over residues 46 to 61 (ALKSQISPRLSDTSRI) the composition is skewed to polar residues. Composition is skewed to low complexity over residues 69 to 81 (TSGS…SSTP) and 120 to 143 (PTLP…LSPV). The span at 146–159 (VINTPPQQPQSVSA) shows a compositional bias: polar residues. Residues 160-194 (STSPNTQYQYYQYQQQSSPIQQQQQQQQATPAATP) show a composition bias toward low complexity. Over residues 195-205 (TVMQMAQNQPS) the composition is skewed to polar residues. The GATA-type zinc finger occupies 282-307 (CHRCGTTETPEWRRGPKGVRTLCNAC).

In terms of assembly, interacts with HDA1.

The protein localises to the nucleus. Functionally, transcription factor required for hyphal growth, biofilm formation, and virulence. Promotes formation of both conventional and pheromone-stimulated biofilms. Binds and recruits HDA1 to promoters of hypha-specific genes in a rapamycin-dependent manner. Involved in the switch between two heritable states, the white and opaque states. These two cell types differ in many characteristics, including cell structure, mating competence, and virulence. Each state is heritable for many generations, and switching between states occurs stochastically at low frequency. In Candida albicans (strain SC5314 / ATCC MYA-2876) (Yeast), this protein is Biofilm regulator 1 (BRG1).